A 338-amino-acid polypeptide reads, in one-letter code: Mitoferrin-1 (338 aa).

The interval 1 to 37 (MELRRGGVGSQAAGRRMDGDCRDGGCGSKDAGSEDYE) is disordered. Solcar repeat units lie at residues 43–131 (ASVS…MKRT), 141–225 (NSHL…LQEQ), and 232–326 (YNPQ…FKYF). Helical transmembrane passes span 45–64 (VSTH…SIMY), 106–125 (GLNV…FACY), 143–162 (HLAN…AVMN), 200–219 (SYTT…FITY), 234–253 (PQSH…AATT), and 301–320 (GIQA…WSVY).

This sequence belongs to the mitochondrial carrier (TC 2.A.29) family. Interacts with ACB10; this interaction stabilizes SLC25A37 and enhances the function of SLC25A37 to import mitochondrial iron during erythroid differentiation.

The protein resides in the mitochondrion inner membrane. The enzyme catalyses Fe(2+)(in) = Fe(2+)(out). Its function is as follows. Mitochondrial iron transporter that specifically mediates iron uptake in developing erythroid cells, thereby playing an essential role in heme biosynthesis. This Rattus norvegicus (Rat) protein is Mitoferrin-1 (Slc25a37).